The following is a 534-amino-acid chain: Prolyl 4-hydroxylase subunit alpha-2 (534 aa).

The N-terminal stretch at 1–21 (MKPWLCLVFFTSAFLIWHAEA) is a signal peptide. The N-linked (GlcNAc...) asparagine glycan is linked to asparagine 115. The TPR repeat unit spans residues 207–240 (VEILDYLSYAVFQFGDLHRAMELTRRLISLDSTH). Residue asparagine 263 is glycosylated (N-linked (GlcNAc...) asparagine). One can recognise a Fe2OG dioxygenase domain in the interval 413–519 (TAELLQVANY…KWVSNKWFHE (107 aa)). The Fe cation site is built by histidine 431, aspartate 433, and histidine 500. Lysine 510 provides a ligand contact to 2-oxoglutarate.

The protein belongs to the P4HA family. Heterotetramer of two alpha-2 chains and two beta chains (the beta chain is the multi-functional PDI). It depends on Fe(2+) as a cofactor. Requires L-ascorbate as cofactor.

It is found in the endoplasmic reticulum lumen. The enzyme catalyses L-prolyl-[collagen] + 2-oxoglutarate + O2 = trans-4-hydroxy-L-prolyl-[collagen] + succinate + CO2. Catalyzes the post-translational formation of 4-hydroxyproline in -Xaa-Pro-Gly- sequences in collagens and other proteins. This Gallus gallus (Chicken) protein is Prolyl 4-hydroxylase subunit alpha-2 (P4HA2).